The chain runs to 727 residues: Engulfment and cell motility protein 1 (727 aa).

Y18 carries the phosphotyrosine; by HCK modification. N6-acetyllysine is present on residues K100 and K105. At Y216 the chain carries Phosphotyrosine; by HCK. An ELMO domain is found at 319–492 (AQRDIIFELR…VVKEQVMRAL (174 aa)). The residue at position 344 (S344) is a Phosphoserine. 2 positions are modified to phosphotyrosine; by HCK: Y395 and Y511. The PH domain maps to 555 to 676 (RLVEGTCFRK…DGLNALLGKD (122 aa)). Positions 707–714 (PDAPPPIP) match the SH3-binding motif. The residue at position 720 (Y720) is a Phosphotyrosine; by HCK.

In terms of assembly, interacts directly with the SH3-domain of DOCK1 via its SH3-binding site. Probably forms a heterotrimeric complex with DOCK1 and RAC1. Interacts with PLEKHG6. Interacts with HCK (via SH3 domain). Interacts with ADGRB1. Interacts with ADGRB3. Interacts with DOCK5. Post-translationally, phosphorylated by HCK.

The protein localises to the cytoplasm. It is found in the cell membrane. In terms of biological role, involved in cytoskeletal rearrangements required for phagocytosis of apoptotic cells and cell motility. Acts in association with DOCK1 and CRK. Was initially proposed to be required in complex with DOCK1 to activate Rac Rho small GTPases. May enhance the guanine nucleotide exchange factor (GEF) activity of DOCK1. The protein is Engulfment and cell motility protein 1 (Elmo1) of Mus musculus (Mouse).